The sequence spans 617 residues: Putative type VI secretion system protein VgrGB (617 aa).

The tract at residues 449–469 (RTFHATNPSPYPLPASKTRTS) is disordered.

This sequence belongs to the VgrG protein family.

Functionally, a Vgr protein that is probably part of a type VI secretion system (T6SS). May be required for export of proteins involved in Rhs-mediated cellular contact-dependent growth inhibition (CDI). This is Putative type VI secretion system protein VgrGB (vgrGB) from Dickeya dadantii (strain 3937) (Erwinia chrysanthemi (strain 3937)).